The following is a 142-amino-acid chain: uncharacterized protein (142 aa).

2 helical membrane passes run 75–97 (VFFRKISFFTPLYFLLLSPYIVA) and 107–124 (LSIVLPVAVLYFSAKLFY).

It localises to the cell membrane. This is an uncharacterized protein from Archaeoglobus fulgidus (strain ATCC 49558 / DSM 4304 / JCM 9628 / NBRC 100126 / VC-16).